The primary structure comprises 394 residues: GTPase Era, mitochondrial (394 aa).

The Era-type G domain maps to 32–280 (KCLQLAVIGA…RDHLMSISPQ (249 aa)). The segment at 40 to 47 (GAPNVGKS) is G1. 40-47 (GAPNVGKS) is a binding site for GTP. The G2 stretch occupies residues 66–70 (DTTTR). Residues 87–90 (DSPG) are G3. GTP-binding positions include 87–91 (DSPGA) and 160–163 (NKID). The segment at 160 to 163 (NKID) is G4. The interval 259–261 (VSS) is G5.

The protein belongs to the TRAFAC class TrmE-Era-EngA-EngB-Septin-like GTPase superfamily. Era GTPase family.

The protein localises to the mitochondrion matrix. It localises to the mitochondrion inner membrane. Its function is as follows. Probable GTPase that plays a role in the mitochondrial ribosomal small subunit assembly. Specifically binds the 12S mitochondrial rRNA (12S mt-rRNA) to a 33 nucleotide section delineating the 3' terminal stem-loop region. May act as a chaperone that protects the 12S mt-rRNA on the 28S mitoribosomal subunit during ribosomal small subunit assembly. May play a role in positively regulating mitochondrial function. Plays a role in fertility. This is GTPase Era, mitochondrial from Caenorhabditis elegans.